Reading from the N-terminus, the 179-residue chain is MLTRQQKELIVEEMSEIFKKTSLILFADFLGFTVADLTELRSKLREKYGDGARFRVVKNTLLNLALKNAEYEGYEEFLKGPTAVLYVTEGDPVEAVKIVYNFYKDKKADLSRLKGGFLEGKKFTAEEVENIAKLPSKEELYAMLVGRVKAPITGLVFVLSGILRNLVYVLNAIKEKKSE.

The protein belongs to the universal ribosomal protein uL10 family. As to quaternary structure, part of the ribosomal stalk of the 50S ribosomal subunit. The N-terminus interacts with L11 and the large rRNA to form the base of the stalk. The C-terminus forms an elongated spine to which L12 dimers bind in a sequential fashion forming a multimeric L10(L12)X complex.

Its function is as follows. Forms part of the ribosomal stalk, playing a central role in the interaction of the ribosome with GTP-bound translation factors. The sequence is that of Large ribosomal subunit protein uL10 from Thermotoga petrophila (strain ATCC BAA-488 / DSM 13995 / JCM 10881 / RKU-1).